The following is a 220-amino-acid chain: Thioredoxin domain-containing protein (220 aa).

The first 19 residues, 1-19 (MKFLILNCLILFSLISSEA), serve as a signal peptide directing secretion. The 122-residue stretch at 20–141 (TNVKLDREDQ…SEFALGDFKN (122 aa)) folds into the Thioredoxin domain. Residues 20 to 181 (TNVKLDREDQ…YDAALAGFVT (162 aa)) lie on the Lumenal side of the membrane. Cys64 and Cys67 are oxidised to a cystine. A helical membrane pass occupies residues 182-202 (ISSFSFLFGLLVGLMLSLFLF). Topologically, residues 203–220 (TRRATRKPKVLTERKKDK) are cytoplasmic. Residues 217–220 (KKDK) carry the Di-lysine motif motif.

Belongs to the protein disulfide isomerase family.

The protein resides in the endoplasmic reticulum membrane. The sequence is that of Thioredoxin domain-containing protein from Theileria parva (East coast fever infection agent).